Here is a 500-residue protein sequence, read N- to C-terminus: Hexose transporter 1 (500 aa).

The Cytoplasmic segment spans residues 1–25 (MKNSNEISSSQSLKNNGSDGFFNTS). The chain crosses the membrane as a helical span at residues 26–46 (LMYVLAACLASFLFGYQVSVL). Over 47-75 (NTIKDFIVIEFGWCAGKEVNCDDSTLKSS) the chain is Extracellular. Residues Cys60 and Cys67 are joined by a disulfide bond. The helical transmembrane segment at 76–96 (FLLASVFIGAVVGSGFSGFLV) threads the bilayer. Over 97–101 (QHGRR) the chain is Cytoplasmic. Residues 102 to 122 (FSLLVIYNFFILVSILTSITH) form a helical membrane-spanning segment. At 123 to 131 (HFHTILFSR) the chain is on the extracellular side. The chain crosses the membrane as a helical span at residues 132–152 (LLSGFGIGLITVSVPMYISEM). Topologically, residues 153–166 (THKDKKGAYGVLHQ) are cytoplasmic. Gln166 is a binding site for alpha-D-glucose. Gln166 provides a ligand contact to beta-D-glucose. Residues 167–187 (LFITFGIFIAVLLGMAMGNVP) form a helical membrane-spanning segment. The Extracellular portion of the chain corresponds to 188-203 (EEVNNPLGTFQQIWWR). Residues 204–224 (LMFFFPCIISILGIVLLTFFF) form a helical membrane-spanning segment. Topologically, residues 225–289 (KEETPYYLFE…RAMKIPSYRY (65 aa)) are cytoplasmic. The chain crosses the membrane as a helical span at residues 290 to 310 (VILLGCILSGLQQFTGINVLV). Residues Gln301, Gln302, and Asn307 each contribute to the alpha-D-glucose site. Gln301 lines the beta-D-glucose pocket. Asn307 serves as a coordination point for beta-D-glucose. The Extracellular segment spans residues 311 to 327 (SNSNALYKGFLTNEWIT). A helical transmembrane segment spans residues 328-348 (TLSVIMTVVNFLMTFPAIYIV). Position 337 (Asn337) interacts with beta-D-glucose. At 349-356 (EKLGRKTL) the chain is on the cytoplasmic side. A helical membrane pass occupies residues 357-377 (LLCGCAGIVCAFLPTAIANLI). Residues 378-390 (NNTSDVVKKLSIS) lie on the Extracellular side of the membrane. Residues 391-411 (ATFVMIVSFAVSYGPVLWIYL) form a helical membrane-spanning segment. Trp408 contributes to the alpha-D-glucose binding site. Over 412–425 (HEMFPSEIKDSAAS) the chain is Cytoplasmic. Residues 426–446 (LASLVNWMCAIIVVFPSDIII) form a helical membrane-spanning segment. At 447 to 451 (KQSPT) the chain is on the extracellular side. The helical transmembrane segment at 452–472 (ILFFIFSGMSIVAFLFIFFFI) threads the bilayer. The Cytoplasmic portion of the chain corresponds to 473–500 (KETKGGEIGTSPYITLEERQKHMGKSVV).

Belongs to the major facilitator superfamily. Sugar transporter (TC 2.A.1.1) family. In terms of assembly, homodimer.

The protein resides in the cell membrane. The catalysed reaction is D-glucose(out) = D-glucose(in). It catalyses the reaction D-fructose(out) = D-fructose(in). It carries out the reaction D-galactose(in) = D-galactose(out). The enzyme catalyses D-mannose(out) = D-mannose(in). The catalysed reaction is D-glucosamine(out) = D-glucosamine(in). It catalyses the reaction D-xylose(out) = D-xylose(in). Inhibited by cytochalasin B. Sodium-independent facilitative hexose transporter. Can transport D-glucose and D-fructose. Can transport D-mannose, D-galactose, D-xylose and D-glucosamine. This chain is Hexose transporter 1, found in Plasmodium knowlesi.